The chain runs to 105 residues: Met repressor (105 aa).

The protein belongs to the MetJ family. Homodimer.

It localises to the cytoplasm. In terms of biological role, this regulatory protein, when combined with SAM (S-adenosylmethionine) represses the expression of the methionine regulon and of enzymes involved in SAM synthesis. The chain is Met repressor from Yersinia pestis bv. Antiqua (strain Antiqua).